An 80-amino-acid chain; its full sequence is Styelin-C (80 aa).

Positions 1–22 (MQMKATILIVLVALFMIQQSEA) are cleaved as a signal peptide. Tryptophan 24 is modified (6'-bromotryptophan). Position 53 is a leucine amide (leucine 53). Positions 55-80 (DMTDEEFQEFMQDIEQAREEELLSRQ) are cleaved as a propeptide — removed in mature form.

The protein resides in the secreted. In terms of biological role, bactericidal against several Gram-positive and Gram-negative bacteria. The polypeptide is Styelin-C (Styela clava (Sea squirt)).